We begin with the raw amino-acid sequence, 206 residues long: Proteasome subunit beta 2 (206 aa).

Residues 1–7 constitute a propeptide, removed in mature form; by autocatalysis; that stretch reads MREAVSK. T8 serves as the catalytic Nucleophile.

It belongs to the peptidase T1B family. In terms of assembly, the 20S proteasome core is composed of 14 alpha and 14 beta subunits that assemble into four stacked heptameric rings, resulting in a barrel-shaped structure. The two inner rings, each composed of seven catalytic beta subunits, are sandwiched by two outer rings, each composed of seven alpha subunits. The catalytic chamber with the active sites is on the inside of the barrel. Has a gated structure, the ends of the cylinder being occluded by the N-termini of the alpha-subunits. Is capped at one or both ends by the proteasome regulatory ATPase, PAN.

The protein resides in the cytoplasm. It catalyses the reaction Cleavage of peptide bonds with very broad specificity.. The formation of the proteasomal ATPase PAN-20S proteasome complex, via the docking of the C-termini of PAN into the intersubunit pockets in the alpha-rings, triggers opening of the gate for substrate entry. Interconversion between the open-gate and close-gate conformations leads to a dynamic regulation of the 20S proteasome proteolysis activity. In terms of biological role, component of the proteasome core, a large protease complex with broad specificity involved in protein degradation. The sequence is that of Proteasome subunit beta 2 from Desulfurococcus amylolyticus (strain DSM 18924 / JCM 16383 / VKM B-2413 / 1221n) (Desulfurococcus kamchatkensis).